Consider the following 148-residue polypeptide: Transthyretin-like protein 2 (148 aa).

An N-terminal signal peptide occupies residues 1–17 (MSKYAILGLVLVGTVAS). The N-linked (GlcNAc...) asparagine glycan is linked to N77.

Belongs to the nematode transthyretin-like family.

The protein localises to the secreted. The sequence is that of Transthyretin-like protein 2 (ttr-2) from Caenorhabditis elegans.